The primary structure comprises 428 residues: Adenylosuccinate synthetase (428 aa).

GTP contacts are provided by residues 12–18 (GDEGKGK) and 40–42 (GHT). Residue Asp13 is the Proton acceptor of the active site. Mg(2+) is bound by residues Asp13 and Gly40. IMP contacts are provided by residues 13-16 (DEGK), 38-41 (NAGH), Thr130, Arg144, Gln225, Thr240, and Arg304. His41 functions as the Proton donor in the catalytic mechanism. 300-306 (VTTGRAR) contacts substrate. GTP is bound by residues Arg306, 332–334 (KID), and 414–416 (SVG).

Belongs to the adenylosuccinate synthetase family. In terms of assembly, homodimer. Mg(2+) serves as cofactor.

It is found in the cytoplasm. It catalyses the reaction IMP + L-aspartate + GTP = N(6)-(1,2-dicarboxyethyl)-AMP + GDP + phosphate + 2 H(+). The protein operates within purine metabolism; AMP biosynthesis via de novo pathway; AMP from IMP: step 1/2. Plays an important role in the de novo pathway of purine nucleotide biosynthesis. Catalyzes the first committed step in the biosynthesis of AMP from IMP. This Clostridium botulinum (strain Okra / Type B1) protein is Adenylosuccinate synthetase.